Consider the following 726-residue polypeptide: Biotin--protein ligase (726 aa).

The disordered stretch occupies residues 28–98 (EVKDQVSNKQ…SDRGGGPVEH (71 aa)). Residues 43 to 75 (PKPEPSLEIKPEQDGMEHVGRDDPKALGEEPKQ) show a composition bias toward basic and acidic residues. Phosphoserine occurs at positions 147 and 299. Residues 463 to 652 (KQLGKVILFA…VLEKLIKEFQ (190 aa)) enclose the BPL/LPL catalytic domain.

Belongs to the biotin--protein ligase family. In terms of assembly, monomer. As to expression, widely expressed. Mostly expressed in muscle, placenta and to a lower extent in the brain, kidney, pancreas, liver and lung.

The protein resides in the cytoplasm. The protein localises to the mitochondrion. The catalysed reaction is apo-[methylmalonyl-CoA:pyruvate carboxytransferase] + biotin + ATP = holo-[methylmalonyl-CoA:pyruvate carboxytransferase] + AMP + diphosphate + H(+). It catalyses the reaction apo-[propionyl-CoA:carbon-dioxide ligase (ADP-forming)] + biotin + ATP = holo-[propionyl-CoA:carbon-dioxide ligase (ADP-forming)] + AMP + diphosphate + H(+). It carries out the reaction apo-[3-methylcrotonoyl-CoA:carbon-dioxide ligase (ADP-forming)] + biotin + ATP = holo-[3-methylcrotonoyl-CoA:carbon-dioxide ligase (ADP-forming)] + AMP + diphosphate + H(+). The enzyme catalyses biotin + L-lysyl-[protein] + ATP = N(6)-biotinyl-L-lysyl-[protein] + AMP + diphosphate + H(+). Biotin--protein ligase catalyzing the biotinylation of the 4 biotin-dependent carboxylases acetyl-CoA-carboxylase, pyruvate carboxylase, propionyl-CoA carboxylase, and methylcrotonyl-CoA carboxylase. This is Biotin--protein ligase from Homo sapiens (Human).